The following is a 155-amino-acid chain: Peptide deformylase 2 (155 aa).

Positions 90 and 132 each coordinate Fe cation. Glu-133 is an active-site residue. His-136 serves as a coordination point for Fe cation.

Belongs to the polypeptide deformylase family. Fe(2+) is required as a cofactor.

The enzyme catalyses N-terminal N-formyl-L-methionyl-[peptide] + H2O = N-terminal L-methionyl-[peptide] + formate. Removes the formyl group from the N-terminal Met of newly synthesized proteins. Requires at least a dipeptide for an efficient rate of reaction. N-terminal L-methionine is a prerequisite for activity but the enzyme has broad specificity at other positions. This Clostridium perfringens (strain 13 / Type A) protein is Peptide deformylase 2.